A 271-amino-acid chain; its full sequence is Delta(3,5)-Delta(2,4)-dienoyl-CoA isomerase (271 aa).

Substrate contacts are provided by residues 62–66 and leucine 120; that span reads SGGKF. The active-site Proton donor/acceptor is glutamate 152. Residues 269–271 carry the Peroxisome targeting signal (PTS1) motif; sequence HKL.

It belongs to the enoyl-CoA hydratase/isomerase family. As to quaternary structure, interacts with ECI1.

It is found in the peroxisome. It carries out the reaction a (3E,5Z)-dienoyl-CoA = a (2E,4E)-(5,6-saturated)-dienoyl-CoA. It functions in the pathway lipid metabolism; fatty acid beta-oxidation. Its function is as follows. Peroxisomal di-isomerase that is involved in fatty acid metabolism enzyme by converting 3,5-dienoyl-CoAs to the corresponding 2,4-dienoyl-CoAs. Required for ECI1 to be located to the peroxisome. The sequence is that of Delta(3,5)-Delta(2,4)-dienoyl-CoA isomerase from Saccharomyces cerevisiae (strain ATCC 204508 / S288c) (Baker's yeast).